The chain runs to 388 residues: Leucine aminopeptidase 1 (388 aa).

The signal sequence occupies residues 1–19 (MKLPALLILGVAASTMVLA). The propeptide occupies 20 to 88 (AIAPDQVPLN…LPKVFPTPAV (69 aa)). Residues asparagine 96, asparagine 119, asparagine 149, asparagine 164, and asparagine 181 are each glycosylated (N-linked (GlcNAc...) asparagine). Residues histidine 189 and aspartate 207 each contribute to the Zn(2+) site. Asparagine 232 carries an N-linked (GlcNAc...) asparagine glycan. Positions 246 and 273 each coordinate Zn(2+). A disulfide bond links cysteine 322 and cysteine 326. Position 355 (histidine 355) interacts with Zn(2+).

The protein belongs to the peptidase M28 family. M28E subfamily. Monomer. It depends on Zn(2+) as a cofactor.

It is found in the secreted. In terms of biological role, extracellular aminopeptidase that allows assimilation of proteinaceous substrates. This chain is Leucine aminopeptidase 1 (LAP1), found in Paracoccidioides brasiliensis (strain Pb03).